Here is a 269-residue protein sequence, read N- to C-terminus: 4-hydroxy-tetrahydrodipicolinate reductase (269 aa).

NAD(+) contacts are provided by residues G8–M13 and E34. R35 contacts NADP(+). NAD(+)-binding positions include G98–T100 and A122–Y125. The active-site Proton donor/acceptor is H155. Residue H156 participates in (S)-2,3,4,5-tetrahydrodipicolinate binding. The Proton donor role is filled by K159. G165 to T166 contributes to the (S)-2,3,4,5-tetrahydrodipicolinate binding site.

The protein belongs to the DapB family.

The protein resides in the cytoplasm. The catalysed reaction is (S)-2,3,4,5-tetrahydrodipicolinate + NAD(+) + H2O = (2S,4S)-4-hydroxy-2,3,4,5-tetrahydrodipicolinate + NADH + H(+). The enzyme catalyses (S)-2,3,4,5-tetrahydrodipicolinate + NADP(+) + H2O = (2S,4S)-4-hydroxy-2,3,4,5-tetrahydrodipicolinate + NADPH + H(+). Its pathway is amino-acid biosynthesis; L-lysine biosynthesis via DAP pathway; (S)-tetrahydrodipicolinate from L-aspartate: step 4/4. Its function is as follows. Catalyzes the conversion of 4-hydroxy-tetrahydrodipicolinate (HTPA) to tetrahydrodipicolinate. The polypeptide is 4-hydroxy-tetrahydrodipicolinate reductase (Haemophilus ducreyi (strain 35000HP / ATCC 700724)).